We begin with the raw amino-acid sequence, 526 residues long: Exodeoxyribonuclease 7 large subunit (526 aa).

The disordered stretch occupies residues 496–526 (GAMTTEGGTPPAGAKKRSAKPADPTKQGSLF).

Belongs to the XseA family. As to quaternary structure, heterooligomer composed of large and small subunits.

It is found in the cytoplasm. It catalyses the reaction Exonucleolytic cleavage in either 5'- to 3'- or 3'- to 5'-direction to yield nucleoside 5'-phosphates.. In terms of biological role, bidirectionally degrades single-stranded DNA into large acid-insoluble oligonucleotides, which are then degraded further into small acid-soluble oligonucleotides. In Rhizobium etli (strain CIAT 652), this protein is Exodeoxyribonuclease 7 large subunit.